Here is a 346-residue protein sequence, read N- to C-terminus: Anthranilate phosphoribosyltransferase (346 aa).

5-phospho-alpha-D-ribose 1-diphosphate contacts are provided by residues glycine 81, glycine 84–aspartate 85, asparagine 91–threonine 94, lysine 109–serine 117, and serine 121. Glycine 81 serves as a coordination point for anthranilate. Residue serine 93 coordinates Mg(2+). Residue asparagine 112 participates in anthranilate binding. Arginine 167 is an anthranilate binding site. Residues aspartate 226 and glutamate 227 each contribute to the Mg(2+) site.

The protein belongs to the anthranilate phosphoribosyltransferase family. In terms of assembly, homodimer. Requires Mg(2+) as cofactor.

It catalyses the reaction N-(5-phospho-beta-D-ribosyl)anthranilate + diphosphate = 5-phospho-alpha-D-ribose 1-diphosphate + anthranilate. The protein operates within amino-acid biosynthesis; L-tryptophan biosynthesis; L-tryptophan from chorismate: step 2/5. Functionally, catalyzes the transfer of the phosphoribosyl group of 5-phosphorylribose-1-pyrophosphate (PRPP) to anthranilate to yield N-(5'-phosphoribosyl)-anthranilate (PRA). This is Anthranilate phosphoribosyltransferase from Hahella chejuensis (strain KCTC 2396).